A 188-amino-acid polypeptide reads, in one-letter code: uncharacterized protein (188 aa).

Belongs to the isochorismatase family.

This is an uncharacterized protein from Escherichia coli O157:H7.